The following is a 78-amino-acid chain: Conotoxin ArMKLT2-0313 (78 aa).

A signal peptide spans 1-22; it reads MKLTCVLIIAVLCLTVCQLITA. Residues 23 to 47 constitute a propeptide that is removed on maturation; the sequence is DYLRDKQKYRSVRLRDGMLNFKGSR. At glutamine 48 the chain carries Pyrrolidone carboxylic acid. 3 disulfide bridges follow: cysteine 49-cysteine 62, cysteine 56-cysteine 67, and cysteine 61-cysteine 75.

It belongs to the conotoxin O1 superfamily. In terms of tissue distribution, expressed by the venom duct.

The protein resides in the secreted. In Conus arenatus (Sand-dusted cone), this protein is Conotoxin ArMKLT2-0313.